A 133-amino-acid chain; its full sequence is Bacteriohemerythrin (133 aa).

Residues His19, His56, Glu60, His75, His79, His115, and Asp120 each contribute to the Fe cation site.

It belongs to the hemerythrin family. Monomer.

Its function is as follows. Oxygen-binding protein. May be involved in a storage mechanism or for delivery to oxygen-requiring enzymes. The oxygen-binding site contains two iron atoms. The sequence is that of Bacteriohemerythrin from Campylobacter jejuni subsp. jejuni serotype O:6 (strain 81116 / NCTC 11828).